Here is a 721-residue protein sequence, read N- to C-terminus: Polyribonucleotide nucleotidyltransferase (721 aa).

Mg(2+) contacts are provided by Asp-487 and Asp-493. Residues 554-613 (PRIETFKIPTDKIREVIGTGGKVIREIVEKTGAKVNIDDDGTVKVASSDGESIKAAIKWI) form the KH domain. The region spanning 623-691 (NAIYDGTVVK…DRGKTRLSMK (69 aa)) is the S1 motif domain. Residues 697 to 721 (TGEDLEAKQKAEAEKAKAEGAPAAE) are disordered. The span at 701–714 (LEAKQKAEAEKAKA) shows a compositional bias: basic and acidic residues.

Belongs to the polyribonucleotide nucleotidyltransferase family. Mg(2+) serves as cofactor.

It is found in the cytoplasm. The enzyme catalyses RNA(n+1) + phosphate = RNA(n) + a ribonucleoside 5'-diphosphate. Its function is as follows. Involved in mRNA degradation. Catalyzes the phosphorolysis of single-stranded polyribonucleotides processively in the 3'- to 5'-direction. The polypeptide is Polyribonucleotide nucleotidyltransferase (Rhodopseudomonas palustris (strain BisA53)).